A 213-amino-acid polypeptide reads, in one-letter code: Phosphatidylserine decarboxylase proenzyme (213 aa).

The active-site Schiff-base intermediate with substrate; via pyruvic acid is the S182. S182 carries the post-translational modification Pyruvic acid (Ser); by autocatalysis.

This sequence belongs to the phosphatidylserine decarboxylase family. PSD-A subfamily. In terms of assembly, heterodimer of a large membrane-associated beta subunit and a small pyruvoyl-containing alpha subunit. Requires pyruvate as cofactor. Is synthesized initially as an inactive proenzyme. Formation of the active enzyme involves a self-maturation process in which the active site pyruvoyl group is generated from an internal serine residue via an autocatalytic post-translational modification. Two non-identical subunits are generated from the proenzyme in this reaction, and the pyruvate is formed at the N-terminus of the alpha chain, which is derived from the carboxyl end of the proenzyme. The post-translation cleavage follows an unusual pathway, termed non-hydrolytic serinolysis, in which the side chain hydroxyl group of the serine supplies its oxygen atom to form the C-terminus of the beta chain, while the remainder of the serine residue undergoes an oxidative deamination to produce ammonia and the pyruvoyl prosthetic group on the alpha chain.

Its subcellular location is the cell membrane. The enzyme catalyses a 1,2-diacyl-sn-glycero-3-phospho-L-serine + H(+) = a 1,2-diacyl-sn-glycero-3-phosphoethanolamine + CO2. Its pathway is phospholipid metabolism; phosphatidylethanolamine biosynthesis; phosphatidylethanolamine from CDP-diacylglycerol: step 2/2. Its function is as follows. Catalyzes the formation of phosphatidylethanolamine (PtdEtn) from phosphatidylserine (PtdSer). The polypeptide is Phosphatidylserine decarboxylase proenzyme (Geotalea uraniireducens (strain Rf4) (Geobacter uraniireducens)).